A 242-amino-acid chain; its full sequence is Potassium/proton antiporter CemA (242 aa).

2 helical membrane passes run isoleucine 116 to leucine 136 and isoleucine 200 to phenylalanine 220.

Belongs to the CemA family.

It is found in the plastid. Its subcellular location is the chloroplast inner membrane. The enzyme catalyses K(+)(in) + H(+)(out) = K(+)(out) + H(+)(in). In terms of biological role, contributes to K(+)/H(+) antiport activity by supporting proton efflux to control proton extrusion and homeostasis in chloroplasts in a light-dependent manner to modulate photosynthesis. Prevents excessive induction of non-photochemical quenching (NPQ) under continuous-light conditions. Indirectly promotes efficient inorganic carbon uptake into chloroplasts. This Chloranthus spicatus (Chulantree) protein is Potassium/proton antiporter CemA.